The primary structure comprises 855 residues: Transcription factor gaf1 (855 aa).

Polar residues predominate over residues 72–112 (KNLTPNGDSNTLTPDTFSDPTAPSSAQSVPPTSSAETTADN). Disordered stretches follow at residues 72–126 (KNLT…PAYS), 149–184 (TSFD…ESQP), 229–287 (SHNL…GFPS), 412–483 (PNSN…DMFS), 602–643 (NKNA…TRTT), and 680–768 (KKRN…SQSM). The span at 149 to 168 (TSFDESTAKSKKRSIADSHF) shows a compositional bias: basic and acidic residues. A Phosphoserine modification is found at S150. Low complexity-rich tracts occupy residues 240–250 (PANSNNSASPN) and 428–444 (NSSK…DSNQ). Polar residues predominate over residues 445–476 (ENAESFNPSISSHNSAEWASGETTGHSSNSPL). Residues 614 to 623 (AEDKKGDANT) are compositionally biased toward basic and acidic residues. 2 stretches are compositionally biased toward low complexity: residues 625–643 (RANA…TRTT) and 707–717 (SKSSSAKSTAA). The segment at 635–659 (CTNCQTRTTPLWRRSPDGQPLCNAC) adopts a GATA-type zinc-finger fold. A phosphoserine mark is found at S727 and S729. Positions 755–767 (QQQSSENESKSQS) are enriched in low complexity.

It localises to the nucleus. Transcriptional activator. This chain is Transcription factor gaf1 (gaf1), found in Schizosaccharomyces pombe (strain 972 / ATCC 24843) (Fission yeast).